A 68-amino-acid polypeptide reads, in one-letter code: Protein SlyX homolog (68 aa).

Belongs to the SlyX family.

This Pseudomonas putida (strain GB-1) protein is Protein SlyX homolog.